A 311-amino-acid polypeptide reads, in one-letter code: Putative RNA-binding protein R05D3.8 (311 aa).

The 81-residue stretch at 155–235 (KRLFVSYFPL…RRAVLKESVK (81 aa)) folds into the RRM domain. A compositionally biased stretch (polar residues) spans 261-270 (TPSRPVTSVH). Residues 261–311 (TPSRPVTSVHASSSASSNHYDPSAAAGYAPLYHQPPESDPLSQCGYGPRKW) are disordered.

The sequence is that of Putative RNA-binding protein R05D3.8 from Caenorhabditis elegans.